Here is a 369-residue protein sequence, read N- to C-terminus: Anhydro-N-acetylmuramic acid kinase (369 aa).

G12–D19 is a binding site for ATP.

The protein belongs to the anhydro-N-acetylmuramic acid kinase family.

It carries out the reaction 1,6-anhydro-N-acetyl-beta-muramate + ATP + H2O = N-acetyl-D-muramate 6-phosphate + ADP + H(+). Its pathway is amino-sugar metabolism; 1,6-anhydro-N-acetylmuramate degradation. The protein operates within cell wall biogenesis; peptidoglycan recycling. Catalyzes the specific phosphorylation of 1,6-anhydro-N-acetylmuramic acid (anhMurNAc) with the simultaneous cleavage of the 1,6-anhydro ring, generating MurNAc-6-P. Is required for the utilization of anhMurNAc either imported from the medium or derived from its own cell wall murein, and thus plays a role in cell wall recycling. This Shewanella sp. (strain W3-18-1) protein is Anhydro-N-acetylmuramic acid kinase.